Consider the following 245-residue polypeptide: 23S rRNA (guanosine-2'-O-)-methyltransferase RlmB (245 aa).

Residues G197, I217, and L226 each coordinate S-adenosyl-L-methionine.

The protein belongs to the class IV-like SAM-binding methyltransferase superfamily. RNA methyltransferase TrmH family. RlmB subfamily.

Its subcellular location is the cytoplasm. The enzyme catalyses guanosine(2251) in 23S rRNA + S-adenosyl-L-methionine = 2'-O-methylguanosine(2251) in 23S rRNA + S-adenosyl-L-homocysteine + H(+). Functionally, specifically methylates the ribose of guanosine 2251 in 23S rRNA. The chain is 23S rRNA (guanosine-2'-O-)-methyltransferase RlmB from Photobacterium profundum (strain SS9).